The following is a 300-amino-acid chain: Probable endonuclease 4 (300 aa).

Histidine 68, histidine 109, glutamate 144, aspartate 178, histidine 181, histidine 213, aspartate 226, histidine 228, and glutamate 258 together coordinate Zn(2+).

The protein belongs to the AP endonuclease 2 family. Requires Zn(2+) as cofactor.

It catalyses the reaction Endonucleolytic cleavage to 5'-phosphooligonucleotide end-products.. Functionally, endonuclease IV plays a role in DNA repair. It cleaves phosphodiester bonds at apurinic or apyrimidinic (AP) sites, generating a 3'-hydroxyl group and a 5'-terminal sugar phosphate. In Latilactobacillus sakei subsp. sakei (strain 23K) (Lactobacillus sakei subsp. sakei), this protein is Probable endonuclease 4.